The sequence spans 81 residues: ATP synthase subunit c, chloroplastic (81 aa).

A run of 2 helical transmembrane segments spans residues 3–23 (PIIC…GAIG) and 57–77 (LAFM…IIFA).

It belongs to the ATPase C chain family. As to quaternary structure, F-type ATPases have 2 components, F(1) - the catalytic core - and F(0) - the membrane proton channel. F(1) has five subunits: alpha(3), beta(3), gamma(1), delta(1), epsilon(1). F(0) has four main subunits: a(1), b(1), b'(1) and c(10-14). The alpha and beta chains form an alternating ring which encloses part of the gamma chain. F(1) is attached to F(0) by a central stalk formed by the gamma and epsilon chains, while a peripheral stalk is formed by the delta, b and b' chains.

It localises to the plastid. The protein localises to the chloroplast thylakoid membrane. Its function is as follows. F(1)F(0) ATP synthase produces ATP from ADP in the presence of a proton or sodium gradient. F-type ATPases consist of two structural domains, F(1) containing the extramembraneous catalytic core and F(0) containing the membrane proton channel, linked together by a central stalk and a peripheral stalk. During catalysis, ATP synthesis in the catalytic domain of F(1) is coupled via a rotary mechanism of the central stalk subunits to proton translocation. Functionally, key component of the F(0) channel; it plays a direct role in translocation across the membrane. A homomeric c-ring of between 10-14 subunits forms the central stalk rotor element with the F(1) delta and epsilon subunits. This is ATP synthase subunit c, chloroplastic from Euglena gracilis.